Consider the following 313-residue polypeptide: Olfactory receptor 8C8 (313 aa).

Topologically, residues 1–27 (MMQITMENKSSVSEFILMGLTDQPELQ) are extracellular. N8 is a glycosylation site (N-linked (GlcNAc...) asparagine). The chain crosses the membrane as a helical span at residues 28–48 (LPLFVLFLMNYTATVMGNLTL). Residues 49–59 (MNLICLNSNLH) lie on the Cytoplasmic side of the membrane. Residues 60-80 (TPMYFFLFNLSFIDFCYSMVF) traverse the membrane as a helical segment. Residues 81–96 (TPKMLMSFILEKNTIS) lie on the Extracellular side of the membrane. A helical transmembrane segment spans residues 97–117 (FGGCMAQLFFFLFFVNSESYV). C100 and C192 are joined by a disulfide. Residues 118-136 (LTAMAYDRYVAICKPLTYK) lie on the Cytoplasmic side of the membrane. Residues 137 to 157 (VIMSPKICCLLIFSSYLMGFA) traverse the membrane as a helical segment. Over 158–208 (SAMAHTGCMIRLSFCDSNIINHYMCDIFPLLPLSCSSTYVNELMSSVVVGS) the chain is Extracellular. Residues 209–229 (AIILCCLIILISYAMILFNII) form a helical membrane-spanning segment. Residues 230 to 239 (HMSSGKGWSK) are Cytoplasmic-facing. A helical membrane pass occupies residues 240–260 (ALGTCGSHIITVSLFYGSGLL). Topologically, residues 261–274 (AYVKPSSAKTVGQG) are extracellular. The helical transmembrane segment at 275-295 (KFFSVFYTLLVPMLNPLIYSL) threads the bilayer. Over 296 to 313 (RNKDVKLAVKKTWKRITS) the chain is Cytoplasmic.

It belongs to the G-protein coupled receptor 1 family. Expressed in neurons in the olfactory epithelium.

It is found in the cell membrane. Potential odorant receptor. This is Olfactory receptor 8C8 from Mus musculus (Mouse).